Here is a 436-residue protein sequence, read N- to C-terminus: GTPase Der (436 aa).

EngA-type G domains follow at residues 4–167 and 175–351; these read PTVA…PVEE and IRFS…ESQN. GTP-binding positions include 10–17, 57–61, 119–122, 181–188, 229–233, and 294–297; these read GRPNVGKS, DTGGI, NKVD, DTAGM, and NKWD. The KH-like domain occupies 352–436; the sequence is KRIPSAVLND…PIHLIARKRK (85 aa).

This sequence belongs to the TRAFAC class TrmE-Era-EngA-EngB-Septin-like GTPase superfamily. EngA (Der) GTPase family. In terms of assembly, associates with the 50S ribosomal subunit.

Its function is as follows. GTPase that plays an essential role in the late steps of ribosome biogenesis. This is GTPase Der from Streptococcus pyogenes serotype M1.